Consider the following 338-residue polypeptide: Lipoate-protein ligase A (338 aa).

Residues 29-216 (DPNQRVLFLW…AFFAHYGARV (188 aa)) enclose the BPL/LPL catalytic domain. ATP-binding positions include R71, 76 to 79 (GAVF), and K134. K134 is a binding site for (R)-lipoate.

The protein belongs to the LplA family. Monomer.

The protein resides in the cytoplasm. It catalyses the reaction L-lysyl-[lipoyl-carrier protein] + (R)-lipoate + ATP = N(6)-[(R)-lipoyl]-L-lysyl-[lipoyl-carrier protein] + AMP + diphosphate + H(+). The protein operates within protein modification; protein lipoylation via exogenous pathway; protein N(6)-(lipoyl)lysine from lipoate: step 1/2. Its pathway is protein modification; protein lipoylation via exogenous pathway; protein N(6)-(lipoyl)lysine from lipoate: step 2/2. Its function is as follows. Catalyzes both the ATP-dependent activation of exogenously supplied lipoate to lipoyl-AMP and the transfer of the activated lipoyl onto the lipoyl domains of lipoate-dependent enzymes. The protein is Lipoate-protein ligase A of Aeromonas salmonicida (strain A449).